A 293-amino-acid chain; its full sequence is Ethanolamine ammonia-lyase small subunit (293 aa).

The adenosylcob(III)alamin site is built by valine 207 and glutamate 228.

This sequence belongs to the EutC family. In terms of assembly, the basic unit is a heterodimer which dimerizes to form tetramers. The heterotetramers trimerize; 6 large subunits form a core ring with 6 small subunits projecting outwards. Adenosylcob(III)alamin is required as a cofactor.

The protein resides in the bacterial microcompartment. It catalyses the reaction ethanolamine = acetaldehyde + NH4(+). It participates in amine and polyamine degradation; ethanolamine degradation. Functionally, catalyzes the deamination of various vicinal amino-alcohols to oxo compounds. Allows this organism to utilize ethanolamine as the sole source of nitrogen and carbon in the presence of external vitamin B12. This Listeria innocua serovar 6a (strain ATCC BAA-680 / CLIP 11262) protein is Ethanolamine ammonia-lyase small subunit.